A 178-amino-acid polypeptide reads, in one-letter code: Cytochrome b6-f complex iron-sulfur subunit (178 aa).

The chain crosses the membrane as a helical span at residues 20–42; the sequence is LLTFGTATGVALGALYPVANYFM. A Rieske domain is found at 65–161; sequence KTGWLATHQA…VDIEDDAVLV (97 aa). The [2Fe-2S] cluster site is built by Cys-107, His-109, Cys-125, and His-128. A disulfide bridge links Cys-112 with Cys-127.

The protein belongs to the Rieske iron-sulfur protein family. As to quaternary structure, the 4 large subunits of the cytochrome b6-f complex are cytochrome b6, subunit IV (17 kDa polypeptide, PetD), cytochrome f and the Rieske protein, while the 4 small subunits are PetG, PetL, PetM and PetN. The complex functions as a dimer. [2Fe-2S] cluster serves as cofactor.

It localises to the cellular thylakoid membrane. The enzyme catalyses 2 oxidized [plastocyanin] + a plastoquinol + 2 H(+)(in) = 2 reduced [plastocyanin] + a plastoquinone + 4 H(+)(out). Functionally, component of the cytochrome b6-f complex, which mediates electron transfer between photosystem II (PSII) and photosystem I (PSI), cyclic electron flow around PSI, and state transitions. The polypeptide is Cytochrome b6-f complex iron-sulfur subunit (Prochlorococcus marinus (strain AS9601)).